Reading from the N-terminus, the 520-residue chain is Glucose starvation modulator protein 1 (520 aa).

The zn(2)-C6 fungal-type DNA-binding region spans 20–48 (CVFCHEKHLQCSNERPCKNCVKRGLAHEC). The PAS domain maps to 376–445 (DYEKLSQLNS…FRLFKTVAVG (70 aa)).

The protein belongs to the ERT1/acuK family.

It is found in the nucleus. Transcription factor which regulates nonfermentable carbon utilization. This is Glucose starvation modulator protein 1 (GSM1) from Scheffersomyces stipitis (strain ATCC 58785 / CBS 6054 / NBRC 10063 / NRRL Y-11545) (Yeast).